Consider the following 515-residue polypeptide: Anthranilate synthase component 1 (515 aa).

Residues Thr40 and 291–293 each bind L-tryptophan; that span reads PYM. 328-329 lines the chorismate pocket; that stretch reads GT. Residue Glu361 participates in Mg(2+) binding. Chorismate is bound by residues Tyr449, Arg469, 483–485, and Gly485; that span reads GAG. Mg(2+) is bound at residue Glu498.

Belongs to the anthranilate synthase component I family. In terms of assembly, heterotetramer consisting of two non-identical subunits: a beta subunit (TrpG) and a large alpha subunit (TrpE). The cofactor is Mg(2+).

It catalyses the reaction chorismate + L-glutamine = anthranilate + pyruvate + L-glutamate + H(+). Its pathway is amino-acid biosynthesis; L-tryptophan biosynthesis; L-tryptophan from chorismate: step 1/5. Its activity is regulated as follows. Feedback inhibited by tryptophan. Its function is as follows. Part of a heterotetrameric complex that catalyzes the two-step biosynthesis of anthranilate, an intermediate in the biosynthesis of L-tryptophan. In the first step, the glutamine-binding beta subunit (TrpG) of anthranilate synthase (AS) provides the glutamine amidotransferase activity which generates ammonia as a substrate that, along with chorismate, is used in the second step, catalyzed by the large alpha subunit of AS (TrpE) to produce anthranilate. In the absence of TrpG, TrpE can synthesize anthranilate directly from chorismate and high concentrations of ammonia. The protein is Anthranilate synthase component 1 (trpE) of Buchnera aphidicola subsp. Schizaphis graminum (strain Sg).